A 215-amino-acid chain; its full sequence is uncharacterized protein (215 aa).

A disordered region spans residues 120-147 (HRAPQGTSSYQEGRRAHEATSAESDDDN).

This is an uncharacterized protein from Homo sapiens (Human).